A 120-amino-acid chain; its full sequence is MFALPGYDAFLGFLLISAAVPILALVTNKLLAPRSRTGERELTYESGMEPIGGAWIQFNIRYYMFALVFVIFDVETVFLYPWAVAFHRLGLLAFIEALIFIAILLVALAYAWRKGALEWS.

The next 3 membrane-spanning stretches (helical) occupy residues G6–V26, M64–V84, and L89–A109.

It belongs to the complex I subunit 3 family. In terms of assembly, NDH-1 can be composed of about 15 different subunits; different subcomplexes with different compositions have been identified which probably have different functions.

It localises to the cellular thylakoid membrane. The enzyme catalyses a plastoquinone + NADH + (n+1) H(+)(in) = a plastoquinol + NAD(+) + n H(+)(out). The catalysed reaction is a plastoquinone + NADPH + (n+1) H(+)(in) = a plastoquinol + NADP(+) + n H(+)(out). Its function is as follows. NDH-1 shuttles electrons from an unknown electron donor, via FMN and iron-sulfur (Fe-S) centers, to quinones in the respiratory and/or the photosynthetic chain. The immediate electron acceptor for the enzyme in this species is believed to be plastoquinone. Couples the redox reaction to proton translocation, and thus conserves the redox energy in a proton gradient. Cyanobacterial NDH-1 also plays a role in inorganic carbon-concentration. This chain is NAD(P)H-quinone oxidoreductase subunit 3, found in Prochlorococcus marinus (strain MIT 9313).